A 415-amino-acid polypeptide reads, in one-letter code: Phosphoribosylamine--glycine ligase (415 aa).

An ATP-grasp domain is found at 108–311 (KKIMKKYNIP…LMQHIIDLDE (204 aa)). ATP is bound at residue 134–191 (IENCELPVVVKKDGLAAGKGVIIADTIEAARSAIEIMYGDEEEGTVVFETFLEGEEFS). Residues Glu281 and Asn283 each contribute to the Mg(2+) site.

This sequence belongs to the GARS family. Requires Mg(2+) as cofactor. It depends on Mn(2+) as a cofactor.

The enzyme catalyses 5-phospho-beta-D-ribosylamine + glycine + ATP = N(1)-(5-phospho-beta-D-ribosyl)glycinamide + ADP + phosphate + H(+). It participates in purine metabolism; IMP biosynthesis via de novo pathway; N(1)-(5-phospho-D-ribosyl)glycinamide from 5-phospho-alpha-D-ribose 1-diphosphate: step 2/2. This Staphylococcus aureus (strain Mu50 / ATCC 700699) protein is Phosphoribosylamine--glycine ligase.